We begin with the raw amino-acid sequence, 377 residues long: Nitric oxide reductase FlRd-NAD(+) reductase (377 aa).

The protein belongs to the FAD-dependent oxidoreductase family. FAD is required as a cofactor.

The protein resides in the cytoplasm. The enzyme catalyses 2 reduced [nitric oxide reductase rubredoxin domain] + NAD(+) + H(+) = 2 oxidized [nitric oxide reductase rubredoxin domain] + NADH. It functions in the pathway nitrogen metabolism; nitric oxide reduction. In terms of biological role, one of at least two accessory proteins for anaerobic nitric oxide (NO) reductase. Reduces the rubredoxin moiety of NO reductase. This is Nitric oxide reductase FlRd-NAD(+) reductase from Salmonella paratyphi B (strain ATCC BAA-1250 / SPB7).